The chain runs to 298 residues: Acetyl-coenzyme A carboxylase carboxyl transferase subunit beta (298 aa).

The interval 1–21 (MNQEVKSGKVLSPSTPWTQRP) is disordered. One can recognise a CoA carboxyltransferase N-terminal domain in the interval 41–298 (PTIECPECHA…RLVSKLMNLP (258 aa)). Residues Cys-45, Cys-48, Cys-64, and Cys-67 each coordinate Zn(2+). Residues 45-67 (CPECHALVTRTAISFNAYVCPQC) form a C4-type zinc finger.

This sequence belongs to the AccD/PCCB family. Acetyl-CoA carboxylase is a heterohexamer composed of biotin carboxyl carrier protein (AccB), biotin carboxylase (AccC) and two subunits each of ACCase subunit alpha (AccA) and ACCase subunit beta (AccD). The cofactor is Zn(2+).

It is found in the cytoplasm. It carries out the reaction N(6)-carboxybiotinyl-L-lysyl-[protein] + acetyl-CoA = N(6)-biotinyl-L-lysyl-[protein] + malonyl-CoA. Its pathway is lipid metabolism; malonyl-CoA biosynthesis; malonyl-CoA from acetyl-CoA: step 1/1. Functionally, component of the acetyl coenzyme A carboxylase (ACC) complex. Biotin carboxylase (BC) catalyzes the carboxylation of biotin on its carrier protein (BCCP) and then the CO(2) group is transferred by the transcarboxylase to acetyl-CoA to form malonyl-CoA. This is Acetyl-coenzyme A carboxylase carboxyl transferase subunit beta from Acinetobacter baumannii (strain AYE).